A 382-amino-acid polypeptide reads, in one-letter code: LIM homeobox transcription factor 1-alpha (382 aa).

LIM zinc-binding domains follow at residues 33-92 (SVCE…LFAV) and 92-154 (VKCG…EREL). 2 disordered regions span residues 161–208 (AASD…QQRR) and 252–285 (KLARRQQQQQQDQQNTQRLSSAQTNGGGSAGMEG). A DNA-binding region (homeobox) is located at residues 195–254 (PKRPRTILTTQQRRAFKASFEVSSKPCRKVRETLAAETGLSVRVVQVWFQNQRAKMKKLA). A compositionally biased stretch (low complexity) spans 256–269 (RQQQQQQDQQNTQR).

Isoform 1 is expressed in many tissues. Not found in heart, liver, spleen and testis. Relatively highly expressed in fetal brain. Isoform LMX1A-4AB is expressed in testis.

It is found in the nucleus. Acts as a transcriptional activator by binding to an A/T-rich sequence, the FLAT element, in the insulin gene promoter. Required for development of the roof plate and, in turn, for specification of dorsal cell fates in the CNS and developing vertebrae. The sequence is that of LIM homeobox transcription factor 1-alpha (LMX1A) from Homo sapiens (Human).